The following is a 229-amino-acid chain: Small ribosomal subunit protein uS3 (229 aa).

The KH type-2 domain occupies 39–107 (VRQYLTEKLK…TAQINIAEIR (69 aa)).

This sequence belongs to the universal ribosomal protein uS3 family. Part of the 30S ribosomal subunit. Forms a tight complex with proteins S10 and S14.

Binds the lower part of the 30S subunit head. Binds mRNA in the 70S ribosome, positioning it for translation. The sequence is that of Small ribosomal subunit protein uS3 from Shewanella frigidimarina (strain NCIMB 400).